The primary structure comprises 427 residues: MKVLLIGSGGREHALAWKLAASPLLEKLYCALGNPGIAAVAELADIGVDDHAALIAFAKEKHIDLVVVGPEAPLVAGLADEMRAEGIRVFGPSRAAAQLEGSKGFTKDLCARFNIPTGAYGRFNNAPKAKAYIRQQGAPIVVKADGLAAGKGVVVAMTLQEALDAVDSCFEGAFGAAGAEVVVEEFLDGEEASFFCICDGKTALPLGSAQDHKRVGDGDTGPNTGGMGAYAPAPVMTPEMVARTMRELIEPTMRGMAEIGAPFSGILFAGLMITSDGPKLIEYNTRFGDPECQVLMMRLNSDLLALVNAAVDGRLDEVSLEWKDEPALTVVMAAEGYPANVKKGSVIRDLEKLESIDGVKLFHAGTALKDGAIVASGGRVLNITATAATVAQAQARAYEALKLIDWPEGFYRSDIGWRAVEREKANR.

Positions 107 to 312 (KDLCARFNIP…LLALVNAAVD (206 aa)) constitute an ATP-grasp domain. Residue 133–193 (IRQQGAPIVV…EEFLDGEEAS (61 aa)) coordinates ATP. Residues E282 and N284 each contribute to the Mg(2+) site.

It belongs to the GARS family. Requires Mg(2+) as cofactor. The cofactor is Mn(2+).

It catalyses the reaction 5-phospho-beta-D-ribosylamine + glycine + ATP = N(1)-(5-phospho-beta-D-ribosyl)glycinamide + ADP + phosphate + H(+). The protein operates within purine metabolism; IMP biosynthesis via de novo pathway; N(1)-(5-phospho-D-ribosyl)glycinamide from 5-phospho-alpha-D-ribose 1-diphosphate: step 2/2. The chain is Phosphoribosylamine--glycine ligase from Brucella melitensis biotype 1 (strain ATCC 23456 / CCUG 17765 / NCTC 10094 / 16M).